The following is a 70-amino-acid chain: Protein FlmC (70 aa).

Component of a type I toxin-antitoxin (TA) system. Either this protein or sequences upstream of it are required for translation of downstream flmA; this could be translationally coupled to flmA. This is Protein FlmC (flmC) from Escherichia coli (strain K12).